The chain runs to 371 residues: uncharacterized protein (371 aa).

Belongs to the Gfo/Idh/MocA family.

This is an uncharacterized protein from Synechocystis sp. (strain ATCC 27184 / PCC 6803 / Kazusa).